A 353-amino-acid polypeptide reads, in one-letter code: Probable tRNA pseudouridine synthase B (353 aa).

Asp45 (nucleophile) is an active-site residue. The region spanning 211–287 is the PUA domain; the sequence is YPKIVAKKSA…DHIFVEAKHG (77 aa). The segment at 292–353 is disordered; the sequence is VRDREKDVQR…TGVHRRPGSH (62 aa). Over residues 309–328 the composition is skewed to basic and acidic residues; it reads NIRDAAHGPDSRTGRGRKET. Basic residues predominate over residues 336–353; it reads RVRKLQNKTGVHRRPGSH.

This sequence belongs to the pseudouridine synthase TruB family. Type 2 subfamily.

It carries out the reaction uridine(55) in tRNA = pseudouridine(55) in tRNA. In terms of biological role, could be responsible for synthesis of pseudouridine from uracil-55 in the psi GC loop of transfer RNAs. The protein is Probable tRNA pseudouridine synthase B of Thermoplasma volcanium (strain ATCC 51530 / DSM 4299 / JCM 9571 / NBRC 15438 / GSS1).